We begin with the raw amino-acid sequence, 357 residues long: S-adenosylmethionine:tRNA ribosyltransferase-isomerase (357 aa).

Belongs to the QueA family. Monomer.

It is found in the cytoplasm. The catalysed reaction is 7-aminomethyl-7-carbaguanosine(34) in tRNA + S-adenosyl-L-methionine = epoxyqueuosine(34) in tRNA + adenine + L-methionine + 2 H(+). Its pathway is tRNA modification; tRNA-queuosine biosynthesis. In terms of biological role, transfers and isomerizes the ribose moiety from AdoMet to the 7-aminomethyl group of 7-deazaguanine (preQ1-tRNA) to give epoxyqueuosine (oQ-tRNA). In Edwardsiella ictaluri (strain 93-146), this protein is S-adenosylmethionine:tRNA ribosyltransferase-isomerase.